We begin with the raw amino-acid sequence, 200 residues long: Recombination protein RecR (200 aa).

The C4-type zinc-finger motif lies at 57–72; that stretch reads CRLCRTLTEEELCPQC. Residues 80–175 enclose the Toprim domain; sequence TLLCVVEGPT…VASRIAHGVP (96 aa).

The protein belongs to the RecR family.

Functionally, may play a role in DNA repair. It seems to be involved in an RecBC-independent recombinational process of DNA repair. It may act with RecF and RecO. In Pseudomonas syringae pv. tomato (strain ATCC BAA-871 / DC3000), this protein is Recombination protein RecR.